A 1831-amino-acid polypeptide reads, in one-letter code: Transcription elongation factor SPT6 (1831 aa).

The span at 1–19 (MAEFLDSEAEESEEEEELD) shows a compositional bias: acidic residues. Disordered regions lie at residues 1–99 (MAEF…YDLI), 117–199 (RRIH…PIFT), 221–240 (KYEEDDYEDDSEGDEYDEDL), and 470–501 (AEQRRKAIQERREAKARRQAAAAENGDDAAEA). Residues 7–59 (SEAEESEEEEELDVNERKRLKKLKAAVSDSSEEEEDDEERLREELKDLIDDNP) are a coiled coil. A phosphoserine mark is found at serine 34, serine 36, and serine 37. Over residues 45–55 (ERLREELKDLI) the composition is skewed to basic and acidic residues. Residues 56-66 (DDNPIEEDDGS) are compositionally biased toward acidic residues. 3 positions are modified to phosphoserine: serine 66, serine 70, and serine 75. The segment covering 85 to 99 (DDLDDRLEDDDYDLI) has biased composition (acidic residues). Basic and acidic residues-rich tracts occupy residues 119 to 140 (IHDNESDGEEQHVDEGLVREQI) and 151 to 163 (SIGHRSERSHREA). Phosphoserine is present on residues serine 124, serine 151, serine 156, and serine 159. Acidic residues-rich tracts occupy residues 164–180 (DDYDDVDTESDADDFIV) and 223–240 (EEDDYEDDSEGDEYDEDL). Phosphothreonine is present on threonine 171. Position 173 is a phosphoserine (serine 173). The stretch at 467-494 (RMQAEQRRKAIQERREAKARRQAAAAEN) forms a coiled coil. Residues 470-482 (AEQRRKAIQERRE) are compositionally biased toward basic and acidic residues. The S1 motif domain occupies 1217–1286 (WNHFDANACP…DRFSVECSSR (70 aa)). An SH2 domain is found at 1329–1440 (IYARRVIAHP…LIQYKYYKPN (112 aa)). Low complexity predominate over residues 1531–1542 (PASASASNLTPL). Disordered stretches follow at residues 1531–1587 (PASA…VGGG), 1602–1716 (GTSG…QQRA), and 1730–1831 (ARRR…YDEN). Over residues 1565-1575 (YSVTGSVTGGT) the composition is skewed to polar residues. A compositionally biased stretch (low complexity) spans 1602–1627 (GTSGSSAPGAGVSSSHYGSSSTPSFG). Positions 1631–1641 (TPYTPSGQTPF) are enriched in polar residues. The span at 1660–1683 (PSPSSQSSSSQRHHYGSSSGTGST) shows a compositional bias: low complexity. Phosphoserine is present on residues serine 1661 and serine 1664. A compositionally biased stretch (gly residues) spans 1689 to 1703 (MGGGGGGGVGGGGGS). Positions 1736–1746 (QHQSHQSYHAQ) are enriched in low complexity. Over residues 1772-1783 (RGTGGGGGGGYG) the composition is skewed to gly residues. The span at 1799–1818 (GMSSKASVRSTPRTNASPHS) shows a compositional bias: polar residues. At serine 1815 the chain carries Phosphoserine.

The protein belongs to the SPT6 family. In terms of assembly, self associates. Interacts with RNA polymerase II. Interacts with the FACT complex, which is composed of dre4/Spt16 and Ssrp/Ssrp1. Interacts with the exosome, a complex with 3'-5' exoribonuclease activity which is composed of at least Csl4, Dis3, Mtr3, Rrp4, Rrp6, Rrp40, Rrp42, Rrp46 and Ski6. Interacts with the DRB sensitivity-inducing factor complex (the DSIF complex), which is composed of Spt4 and Spt5.

It is found in the nucleus. Its function is as follows. Histone H3-H4 chaperone that plays a role in maintenance of chromatin structure during RNA polymerase II transcription elongation. Required for the transcriptional induction of heat shock response genes and for maximal recruitment of two other elongation factors, Spt5 and Paf1, to the induced Hsp70. Plays a critical role in normal fly development throughout the lifecycle. This Drosophila melanogaster (Fruit fly) protein is Transcription elongation factor SPT6 (Spt6).